Consider the following 422-residue polypeptide: Protein phosphatase methylesterase 1 (422 aa).

The interval 1–27 (MSDMFRKSVLNKLPHLPPTRAPWADES) is disordered. Catalysis depends on residues Ser-207, Asp-234, and His-371.

The protein belongs to the AB hydrolase superfamily.

The catalysed reaction is [phosphatase 2A protein]-C-terminal L-leucine methyl ester + H2O = [phosphatase 2A protein]-C-terminal L-leucine + methanol + H(+). Demethylates proteins that have been reversibly carboxymethylated. Demethylates the phosphatase PP2A catalytic subunit. The polypeptide is Protein phosphatase methylesterase 1 (PPE1) (Cryptococcus neoformans var. neoformans serotype D (strain B-3501A) (Filobasidiella neoformans)).